A 283-amino-acid polypeptide reads, in one-letter code: MTLTTTHIADPSHASPLGKATEYQSHYAPELLYPIPRQLKRSELGITDANLPFVGEDLWNAYELSWLNSKGKPVVAVGTFRVPANSPNLIESKSFKLYLNSFNQSSFDNIAAVSATMSRDLSAAAGSPIIVTLEPLSASPLASIGTPDGILLDELDITCDRYQPEPALLATLPGENVEETLYSHLLKSNCLVTGQPDWAMVVIRYRGKPIDRAGLLRYIVSFRNHNEFHEQCVERIFSDIRVRCQPEVLAVHARYTRRGGLDINPFRSTGDYAAPDNTREIRQ.

Position 90 to 92 (90 to 92 (IES)) interacts with substrate. 92–93 (SK) provides a ligand contact to NADPH. C190 acts as the Thioimide intermediate in catalysis. D197 (proton donor) is an active-site residue. 229–230 (HE) is a substrate binding site. 258-259 (RG) is an NADPH binding site.

The protein belongs to the GTP cyclohydrolase I family. QueF type 2 subfamily. Homodimer.

The protein resides in the cytoplasm. It catalyses the reaction 7-aminomethyl-7-carbaguanine + 2 NADP(+) = 7-cyano-7-deazaguanine + 2 NADPH + 3 H(+). The protein operates within tRNA modification; tRNA-queuosine biosynthesis. In terms of biological role, catalyzes the NADPH-dependent reduction of 7-cyano-7-deazaguanine (preQ0) to 7-aminomethyl-7-deazaguanine (preQ1). This Dechloromonas aromatica (strain RCB) protein is NADPH-dependent 7-cyano-7-deazaguanine reductase.